Consider the following 652-residue polypeptide: Fimbrin-4 (652 aa).

Calponin-homology (CH) domains follow at residues E116 to L233, L261 to N364, S388 to M494, and D509 to L617. Actin-binding stretches follow at residues E116–N364 and S388–L617. A disordered region spans residues T623 to V652. Residues I640–V652 are compositionally biased toward polar residues.

In terms of assembly, interacts with F-actin.

The protein resides in the cytoplasm. The protein localises to the cytoskeleton. Functionally, cross-links actin filaments (F-actin). Stabilizes and prevents F-actin depolymerization mediated by profilin. May regulate actin cytoarchitecture, cell cycle, cell division, cell elongation and cytoplasmic tractus. The sequence is that of Fimbrin-4 from Arabidopsis thaliana (Mouse-ear cress).